We begin with the raw amino-acid sequence, 378 residues long: Spermidine/putrescine import ATP-binding protein PotA (378 aa).

The ABC transporter domain occupies 18–248; that stretch reads VQLAGIRKCF…PKNLFVAGFI (231 aa). 50-57 is a binding site for ATP; it reads GPSGCGKT.

The protein belongs to the ABC transporter superfamily. Spermidine/putrescine importer (TC 3.A.1.11.1) family. As to quaternary structure, the complex is composed of two ATP-binding proteins (PotA), two transmembrane proteins (PotB and PotC) and a solute-binding protein (PotD).

Its subcellular location is the cell inner membrane. The enzyme catalyses ATP + H2O + polyamine-[polyamine-binding protein]Side 1 = ADP + phosphate + polyamineSide 2 + [polyamine-binding protein]Side 1.. Part of the ABC transporter complex PotABCD involved in spermidine/putrescine import. Responsible for energy coupling to the transport system. This is Spermidine/putrescine import ATP-binding protein PotA from Shigella boydii serotype 4 (strain Sb227).